Here is a 1073-residue protein sequence, read N- to C-terminus: PX domain-containing protein LEC1 (1073 aa).

Positions Cys-218–Ser-228 are enriched in basic and acidic residues. The interval Cys-218–Ala-240 is disordered. The segment covering Lys-229–Ser-238 has biased composition (low complexity). The 234-residue stretch at Leu-273–Asp-506 folds into the PX domain. A phosphoserine mark is found at Ser-310 and Ser-451. The interval Ile-431–Tyr-456 is disordered. Over residues Lys-432 to Phe-453 the composition is skewed to acidic residues.

Its subcellular location is the endoplasmic reticulum membrane. It localises to the lipid droplet. Its function is as follows. Phosphoinositide-binding protein that plays a role in regulation of ergosterol distribution in the cell. Facilitates ergosterol transport between plasma membrane and lipid droplets. The polypeptide is PX domain-containing protein LEC1 (Saccharomyces cerevisiae (strain ATCC 204508 / S288c) (Baker's yeast)).